A 330-amino-acid polypeptide reads, in one-letter code: Solute carrier family 25 member 16 (330 aa).

Solcar repeat units follow at residues 32-118 (FYWL…YKTL), 126-214 (SGHV…LKSV), and 236-326 (LKTH…MKQF). 6 consecutive transmembrane segments (helical) span residues 33 to 52 (YWLR…KTTV), 95 to 112 (GAMM…FMAF), 132 to 149 (LMAG…TYPL), 189 to 209 (GLMP…FTFG), 242 to 262 (LLCG…FDVT), and 297 to 317 (GLYR…AVAF).

This sequence belongs to the mitochondrial carrier (TC 2.A.29) family. As to expression, mostly in thyroid, liver, lung, kidney and to a lesser extent in heart and skeletal muscle.

It is found in the mitochondrion inner membrane. Functionally, may be involved in the transport of coenzyme A in the mitochondrial matrix. Very little is known about the physiological function of this carrier. The polypeptide is Solute carrier family 25 member 16 (SLC25A16) (Bos taurus (Bovine)).